The chain runs to 530 residues: Formate--tetrahydrofolate ligase (530 aa).

Residue 46–53 (TPEGEGKT) coordinates ATP.

Belongs to the formate--tetrahydrofolate ligase family.

The catalysed reaction is (6S)-5,6,7,8-tetrahydrofolate + formate + ATP = (6R)-10-formyltetrahydrofolate + ADP + phosphate. It functions in the pathway one-carbon metabolism; tetrahydrofolate interconversion. This is Formate--tetrahydrofolate ligase from Malacoplasma penetrans (strain HF-2) (Mycoplasma penetrans).